Here is a 1170-residue protein sequence, read N- to C-terminus: Error-prone DNA polymerase (1170 aa).

Disordered stretches follow at residues 867 to 899 (RGAR…LHND) and 1129 to 1170 (IPHG…RDFH). Residues 886 to 899 (PRNDNDRQIPLHND) show a composition bias toward basic and acidic residues.

It belongs to the DNA polymerase type-C family. DnaE2 subfamily.

Its subcellular location is the cytoplasm. It carries out the reaction DNA(n) + a 2'-deoxyribonucleoside 5'-triphosphate = DNA(n+1) + diphosphate. Functionally, DNA polymerase involved in damage-induced mutagenesis and translesion synthesis (TLS). It is not the major replicative DNA polymerase. The protein is Error-prone DNA polymerase of Bradyrhizobium sp. (strain ORS 278).